The following is a 173-amino-acid chain: NADH-ubiquinone oxidoreductase chain 6 (173 aa).

A run of 4 helical transmembrane segments spans residues 24 to 44 (AMGL…GMFV), 47 to 67 (FWFS…LFIY), 81 to 101 (MKLF…SFFF), and 142 to 162 (LITL…VKIT).

The protein belongs to the complex I subunit 6 family.

It localises to the mitochondrion membrane. The enzyme catalyses a ubiquinone + NADH + 5 H(+)(in) = a ubiquinol + NAD(+) + 4 H(+)(out). Functionally, core subunit of the mitochondrial membrane respiratory chain NADH dehydrogenase (Complex I) that is believed to belong to the minimal assembly required for catalysis. Complex I functions in the transfer of electrons from NADH to the respiratory chain. The immediate electron acceptor for the enzyme is believed to be ubiquinone. The sequence is that of NADH-ubiquinone oxidoreductase chain 6 from Aedes aegypti (Yellowfever mosquito).